The chain runs to 107 residues: Antimicrobial peptide damicornin (107 aa).

A signal peptide spans 1 to 22 (MKVLVILFGAMLVLMEFQKASA). Positions 23-67 (ATLLEDFDDDDDLLDDGGDFDLEANSDASSGNGNDSNDAVPEKRR) are excised as a propeptide. Residues 37 to 46 (DDGGDFDLEA) are compositionally biased toward acidic residues. The interval 37 to 62 (DDGGDFDLEANSDASSGNGNDSNDAV) is disordered. The span at 47-61 (NSDASSGNGNDSNDA) shows a compositional bias: low complexity. 3 disulfides stabilise this stretch: Cys-69/Cys-105, Cys-78/Cys-99, and Cys-85/Cys-103. An Arginine amide modification is found at Arg-106.

This sequence belongs to the coral AMP family. Is specifically expressed in the granular cells of the ectoderm.

It localises to the cytoplasm. The protein resides in the stress granule. The protein localises to the secreted. In terms of biological role, cationic peptide with probable antimicrobial activity against coral pathogens. Shows in vitro activity against Gram-positive bacteria and the filamentous fungus F.oxysporum (MIC=1.25 uM). Gram-positive bacteria tested are B.megaterium (MIC=20 uM), S.aureus (MIC=5 uM), M. luteus (MIC=1.25 uM), B.stationis (MIC=10 uM), M.maritypicum (MIC=20 uM). Has no or little effect against Gram-negative bacteria (the coral pathogen V.coralliilyticus (MIC&gt;20 uM), V.aesturianus (MIC&gt;20 uM), V.shiloi (MIC&gt;20 uM), and E.coli (MIC=10 uM)). Has no hemolytic activity against sheep erythrocytes. The protein is Antimicrobial peptide damicornin of Pocillopora damicornis (Cauliflower coral).